A 115-amino-acid polypeptide reads, in one-letter code: NADH-ubiquinone oxidoreductase chain 3 (115 aa).

3 helical membrane passes run 5–25 (LTFMTDVILALLLVMIAFWLP), 55–75 (FFLVAITFLLFDLEIALLLPL), and 86–106 (LMLTMALLLISILAAGLAYEW).

Belongs to the complex I subunit 3 family. In terms of assembly, core subunit of respiratory chain NADH dehydrogenase (Complex I) which is composed of 45 different subunits. Interacts with TMEM186. Interacts with TMEM242.

The protein localises to the mitochondrion inner membrane. The enzyme catalyses a ubiquinone + NADH + 5 H(+)(in) = a ubiquinol + NAD(+) + 4 H(+)(out). In terms of biological role, core subunit of the mitochondrial membrane respiratory chain NADH dehydrogenase (Complex I) which catalyzes electron transfer from NADH through the respiratory chain, using ubiquinone as an electron acceptor. Essential for the catalytic activity of complex I. The polypeptide is NADH-ubiquinone oxidoreductase chain 3 (Avahi unicolor (Sambirano woolly lemur)).